The sequence spans 1130 residues: BTB/POZ domain-containing protein 7 (1130 aa).

Over residues 1–10 the composition is skewed to polar residues; the sequence is MGANASNYPH. The disordered stretch occupies residues 1-24; sequence MGANASNYPHSCSPRVGGNSQAQQ. A lipid anchor (N-myristoyl glycine) is attached at Gly-2. BTB domains lie at 142–211 and 247–341; these read TDVD…GMED and YDVV…DLSV. Positions 413 to 479 constitute a BACK domain; it reads YGSKWVHRQA…WGEHQLMKRI (67 aa). Position 722 is a phosphoserine (Ser-722). Disordered regions lie at residues 898–1050 and 1062–1130; these read SEAG…PAHV and FGLT…KSAL. Composition is skewed to basic and acidic residues over residues 923–935 and 996–1005; these read PTLE…RENQ and KKQEDPRREY. Ser-1008 is subject to Phosphoserine. Polar residues predominate over residues 1063–1075; the sequence is GLTSNRPPSHSAC. Composition is skewed to basic and acidic residues over residues 1080–1090 and 1101–1112; these read LEERSSRRLTD and RNADLERGDSIS.

In terms of tissue distribution, specifically expressed in embryonic epithelia.

Its subcellular location is the nucleus. In terms of biological role, acts as a mediator of epithelial dynamics and organ branching by promoting cleft progression. Induced following accumulation of fibronectin in forming clefts, leading to local expression of the cell-scattering SNAIL2 and suppression of E-cadherin levels, thereby altering cell morphology and reducing cell-cell adhesion. This stimulates cell separation at the base of forming clefts by local, dynamic intercellular gap formation and promotes cleft progression. The polypeptide is BTB/POZ domain-containing protein 7 (Btbd7) (Mus musculus (Mouse)).